Consider the following 787-residue polypeptide: Serine/threonine-protein kinase SCH9 (787 aa).

Disordered regions lie at residues 1–82, 132–172, and 238–280; these read MVDF…QSGT, PQQQ…GSSQ, and SPVS…LFGQ. Residues 132-155 show a composition bias toward low complexity; it reads PQQQQQQQAQQPPPEQQQSSAPYQ. 2 stretches are compositionally biased toward polar residues: residues 156 to 172 and 239 to 263; these read NSAN…GSSQ and PVSS…SNHG. The C2 domain maps to 182–354; that stretch reads DKTGNKLSPA…KNNKNESEWL (173 aa). The Protein kinase domain maps to 392–653; the sequence is FHFLRLLGKG…ARELKAHPFF (262 aa). Residues 398–406 and Lys-421 contribute to the ATP site; that span reads LGKGTFGQV. Residue Asp-518 is the Proton acceptor of the active site. The 76-residue stretch at 654–729 folds into the AGC-kinase C-terminal domain; the sequence is ADIDWDLLRA…VDDSTMDDHF (76 aa).

This sequence belongs to the protein kinase superfamily. AGC Ser/Thr protein kinase family. cAMP subfamily.

It catalyses the reaction L-seryl-[protein] + ATP = O-phospho-L-seryl-[protein] + ADP + H(+). It carries out the reaction L-threonyl-[protein] + ATP = O-phospho-L-threonyl-[protein] + ADP + H(+). Protein kinase that is part of growth control pathway which is at least partially redundant with the cAMP pathway. Plays a role in filamentous growth and virulence. Prevents hypha formation specifically under hypoxia at high CO(2) levels. Required for chlamydospore formation, distinctive morphological feature of the fungal pathogen C.albicans that can be induced to form in oxygen-limited environments and has been reported in clinical specimens. This is Serine/threonine-protein kinase SCH9 (SCH9) from Candida albicans (strain SC5314 / ATCC MYA-2876) (Yeast).